Here is a 156-residue protein sequence, read N- to C-terminus: Small ribosomal subunit protein uS7 (156 aa).

Belongs to the universal ribosomal protein uS7 family. In terms of assembly, part of the 30S ribosomal subunit. Contacts proteins S9 and S11.

In terms of biological role, one of the primary rRNA binding proteins, it binds directly to 16S rRNA where it nucleates assembly of the head domain of the 30S subunit. Is located at the subunit interface close to the decoding center, probably blocks exit of the E-site tRNA. This Syntrophotalea carbinolica (strain DSM 2380 / NBRC 103641 / GraBd1) (Pelobacter carbinolicus) protein is Small ribosomal subunit protein uS7.